The following is a 938-amino-acid chain: Glutamate receptor ionotropic, NMDA 1 (938 aa).

A signal peptide spans Met-1 to Ala-18. Over Arg-19–Gln-559 the chain is Extracellular. N-linked (GlcNAc...) asparagine glycosylation is found at Asn-61, Asn-203, Asn-239, Asn-276, Asn-300, Asn-350, Asn-368, Asn-440, Asn-471, and Asn-491. The cysteines at positions 79 and 308 are disulfide-linked. 2 disulfide bridges follow: Cys-420-Cys-454 and Cys-436-Cys-455. Glycine contacts are provided by Pro-516, Thr-518, and Arg-523. Residues Ser-560 to Leu-580 form a helical membrane-spanning segment. Residues Asp-581–Ser-604 are Cytoplasmic-facing. The tract at residues Leu-603–Pro-624 is pore-forming. Residues Ser-605–Leu-615 constitute an intramembrane region (discontinuously helical). Over Asn-616–Phe-627 the chain is Cytoplasmic. A helical transmembrane segment spans residues Ser-628–Thr-648. The Extracellular portion of the chain corresponds to Ala-649–Glu-811. N-linked (GlcNAc...) asparagine glycosylation occurs at Asn-674. Residues Ser-688 and Asp-732 each contribute to the glycine site. The cysteines at positions 744 and 798 are disulfide-linked. An N-linked (GlcNAc...) asparagine glycan is attached at Asn-771. The helical transmembrane segment at Asn-812 to Ile-835 threads the bilayer. Topologically, residues Ala-836–Ser-938 are cytoplasmic. 4 positions are modified to phosphoserine; by PKC: Ser-889, Ser-890, Ser-896, and Ser-897. The disordered stretch occupies residues Ser-889 to Ser-938. Basic and acidic residues predominate over residues Val-916 to Gly-927.

Belongs to the glutamate-gated ion channel (TC 1.A.10.1) family. NR1/GRIN1 subfamily. As to quaternary structure, heterotetramer; the NMDAR subunits are modular and harbor tiered domains that function in concert to regulate opening and closing of the cation-selective ion channel pore. Forms heterotetrameric channels composed of two GluN1/zeta subunits (GRIN1), and two identical GluN2/epsilon subunits (GRIN2A, GRIN2B, GRIN2C or GRIN2D) or GluN3 subunits (GRIN3A or GRIN3B) (in vitro). Can also form heterotetrameric channels that contain at least two GluN1 subunits and at least two different GluN2 subunits (or a combination of one GluN2 and one GluN3 subunits) (in vitro). In vivo, the subunit composition may vary in function of the expression levels of the different subunits. Found in a complex with GRIN2A or GRIN2B, GRIN3A and PPP2CB. Found in a complex with GRIN2A or GRIN2B and GRIN3B. Interacts with SNX27 (via PDZ domain); the interaction is required for recycling to the plasma membrane when endocytosed and prevent degradation in lysosomes. Interacts with DLG4 and MPDZ. Interacts with LRFN1 and LRFN2. Interacts with MYZAP. Found in a complex with DLG4 and PRR7. Found in a complex with GRIN2B and PRR7. Interacts with PRR7; the interaction is reduced following NMDA receptor activity. In terms of processing, NMDA is probably regulated by C-terminal phosphorylation of an isoform of GRIN1 by PKC. Dephosphorylated on Ser-897 probably by protein phosphatase 2A (PPP2CB). Its phosphorylated state is influenced by the formation of the NMDAR-PPP2CB complex and the NMDAR channel activity.

It localises to the cell membrane. The protein resides in the postsynaptic cell membrane. The protein localises to the postsynaptic density membrane. Its subcellular location is the synaptic cell membrane. The enzyme catalyses Ca(2+)(in) = Ca(2+)(out). The catalysed reaction is Na(+)(in) = Na(+)(out). It carries out the reaction K(+)(in) = K(+)(out). NMDA glutamate receptor activity is inhbited by Mg2(+) in a voltage-dependent manner; Mg2(+)-induced blockade occurs only at negative potentials and decreases with membrane depolarization. 7-chlorokynurenate (50 uM) or Zn2(+) (100 uM) partially inhibit the NMDA glutamate receptor activity, while acide 2-amino-5-phosphonovalerique(100 uM) almost completely blocked the NMDA glutamate receptor activity. Dizocilpine (1 uM) results in long lasting and almost complete block of the NMDA glutamate receptor activity. In terms of biological role, component of N-methyl-D-aspartate (NMDA) receptors (NMDARs) that function as heterotetrameric, ligand-gated cation channels with high calcium permeability and voltage-dependent block by Mg(2+). NMDARs participate in synaptic plasticity for learning and memory formation by contributing to the long-term potentiation (LTP). Channel activation requires binding of the neurotransmitter L-glutamate to the GluN2 subunit, glycine or D-serine binding to the GluN1 subunit, plus membrane depolarization to eliminate channel inhibition by Mg(2+). NMDARs mediate simultaneously the potasium efflux and the influx of calcium and sodium. Each GluN2 or GluN3 subunit confers differential attributes to channel properties, including activation, deactivation and desensitization kinetics, pH sensitivity, Ca2(+) permeability, and binding to allosteric modulators. This Homo sapiens (Human) protein is Glutamate receptor ionotropic, NMDA 1.